The chain runs to 542 residues: Protein phosphatase 1G (542 aa).

Gly2 carries the N-myristoyl glycine lipid modification. Arg22 carries the omega-N-methylarginine modification. In terms of domain architecture, PPM-type phosphatase spans 26–502 (PYGFSAMQGW…DNMTCIIICF (477 aa)). Mn(2+) is bound by residues Asp60 and Gly61. Disordered stretches follow at residues 118–139 (AGRP…DVDN) and 162–325 (QNCQ…SDSG). Thr122 carries the post-translational modification Phosphothreonine. Composition is skewed to acidic residues over residues 123–139 (EDED…DVDN) and 259–309 (DSED…DEEM). An N6-acetyllysine modification is found at Lys380. Residues Asp438 and Asp493 each contribute to the Mn(2+) site. The interval 510-542 (LQPESGKRKLEEALSTEGAEENGNSDKKKAKRD) is disordered. Ser524 is subject to Phosphoserine.

Belongs to the PP2C family. Interacts with NOL3; may dephosphorylate NOL3. It depends on Mg(2+) as a cofactor. Mn(2+) serves as cofactor.

Its subcellular location is the cytoplasm. It localises to the membrane. The catalysed reaction is O-phospho-L-seryl-[protein] + H2O = L-seryl-[protein] + phosphate. The enzyme catalyses O-phospho-L-threonyl-[protein] + H2O = L-threonyl-[protein] + phosphate. The polypeptide is Protein phosphatase 1G (Rattus norvegicus (Rat)).